Reading from the N-terminus, the 364-residue chain is Chorismate synthase (364 aa).

Residue Arg-48 coordinates NADP(+). FMN is bound by residues 131–133, 243–244, Gly-288, 303–307, and Arg-329; these read RSS, NA, and KPTSS.

It belongs to the chorismate synthase family. In terms of assembly, homotetramer. FMNH2 is required as a cofactor.

It catalyses the reaction 5-O-(1-carboxyvinyl)-3-phosphoshikimate = chorismate + phosphate. It functions in the pathway metabolic intermediate biosynthesis; chorismate biosynthesis; chorismate from D-erythrose 4-phosphate and phosphoenolpyruvate: step 7/7. Catalyzes the anti-1,4-elimination of the C-3 phosphate and the C-6 proR hydrogen from 5-enolpyruvylshikimate-3-phosphate (EPSP) to yield chorismate, which is the branch point compound that serves as the starting substrate for the three terminal pathways of aromatic amino acid biosynthesis. This reaction introduces a second double bond into the aromatic ring system. This Brucella melitensis biotype 2 (strain ATCC 23457) protein is Chorismate synthase.